The following is a 147-amino-acid chain: MRTYTPKPGDINRQWHVIDATDVVLGRLASQTAILLRGKHKATFAPHMDMGDFVIIINAEKVALTGAKLEQKRAYRHSGYPGGLTSVNYAELLESNPVRAVEKAIKGMLPKNSLAAQQLGKLKVYRGAEHPHAAQQPKTFEISQVAQ.

It belongs to the universal ribosomal protein uL13 family. As to quaternary structure, part of the 50S ribosomal subunit.

This protein is one of the early assembly proteins of the 50S ribosomal subunit, although it is not seen to bind rRNA by itself. It is important during the early stages of 50S assembly. The protein is Large ribosomal subunit protein uL13 of Arthrobacter sp. (strain FB24).